The sequence spans 70 residues: DNA-directed RNA polymerase subunit omega (70 aa).

This sequence belongs to the RNA polymerase subunit omega family. In terms of assembly, the RNAP catalytic core consists of 2 alpha, 1 beta, 1 beta' and 1 omega subunit. When a sigma factor is associated with the core the holoenzyme is formed, which can initiate transcription.

It carries out the reaction RNA(n) + a ribonucleoside 5'-triphosphate = RNA(n+1) + diphosphate. Its function is as follows. Promotes RNA polymerase assembly. Latches the N- and C-terminal regions of the beta' subunit thereby facilitating its interaction with the beta and alpha subunits. This is DNA-directed RNA polymerase subunit omega from Shouchella clausii (strain KSM-K16) (Alkalihalobacillus clausii).